A 44-amino-acid polypeptide reads, in one-letter code: Unknown protein 9 (44 aa).

The chain is Unknown protein 9 from Pseudotsuga menziesii (Douglas-fir).